Consider the following 467-residue polypeptide: ATP synthase subunit beta (467 aa).

154 to 161 (GGAGVGKT) is a binding site for ATP.

Belongs to the ATPase alpha/beta chains family. In terms of assembly, F-type ATPases have 2 components, CF(1) - the catalytic core - and CF(0) - the membrane proton channel. CF(1) has five subunits: alpha(3), beta(3), gamma(1), delta(1), epsilon(1). CF(0) has three main subunits: a(1), b(2) and c(9-12). The alpha and beta chains form an alternating ring which encloses part of the gamma chain. CF(1) is attached to CF(0) by a central stalk formed by the gamma and epsilon chains, while a peripheral stalk is formed by the delta and b chains.

It localises to the cell inner membrane. It carries out the reaction ATP + H2O + 4 H(+)(in) = ADP + phosphate + 5 H(+)(out). In terms of biological role, produces ATP from ADP in the presence of a proton gradient across the membrane. The catalytic sites are hosted primarily by the beta subunits. This chain is ATP synthase subunit beta, found in Petrotoga mobilis (strain DSM 10674 / SJ95).